Here is an 89-residue protein sequence, read N- to C-terminus: MAEENIIFVGKKPTMNYVLAVVTQFNNNANKIIIKARGKTISKAVDVAEITRHKFIPDAKYEEIRLDTETLQGERGSSNVSSIEITLSR.

Lys11 is modified (N6-acetyllysine).

Belongs to the histone-like Alba family. Acetylated. Acetylation at Lys-11 decreases DNA-binding affinity.

Its subcellular location is the cytoplasm. The protein localises to the chromosome. Functionally, binds double-stranded DNA tightly but without sequence specificity. Involved in DNA compaction. This Thermoplasma volcanium (strain ATCC 51530 / DSM 4299 / JCM 9571 / NBRC 15438 / GSS1) protein is DNA/RNA-binding protein Alba.